A 435-amino-acid chain; its full sequence is NADH-quinone oxidoreductase subunit D (435 aa).

Belongs to the complex I 49 kDa subunit family. In terms of assembly, NDH-1 is composed of 14 different subunits. Subunits NuoB, C, D, E, F, and G constitute the peripheral sector of the complex.

It is found in the cell inner membrane. It carries out the reaction a quinone + NADH + 5 H(+)(in) = a quinol + NAD(+) + 4 H(+)(out). In terms of biological role, NDH-1 shuttles electrons from NADH, via FMN and iron-sulfur (Fe-S) centers, to quinones in the respiratory chain. The immediate electron acceptor for the enzyme in this species is believed to be ubiquinone. Couples the redox reaction to proton translocation (for every two electrons transferred, four hydrogen ions are translocated across the cytoplasmic membrane), and thus conserves the redox energy in a proton gradient. This Xanthomonas oryzae pv. oryzae (strain MAFF 311018) protein is NADH-quinone oxidoreductase subunit D.